A 734-amino-acid polypeptide reads, in one-letter code: Photosystem I P700 chlorophyll a apoprotein A2 (734 aa).

The next 8 helical transmembrane spans lie at 46 to 69 (IFAS…FHVA), 135 to 158 (LYAG…LHLQ), 175 to 199 (LNHH…HVAI), 273 to 291 (IAHH…GHMY), 330 to 353 (LHFQ…QHMY), 369 to 395 (SALY…IFFV), 417 to 439 (AIIS…IYVH), and 517 to 535 (FLIH…LILV). [4Fe-4S] cluster contacts are provided by C559 and C568. The next 2 helical transmembrane spans lie at 575-596 (AFYL…YWHW) and 643-665 (LSVW…MFLI). Residues H654, M662, and Y670 each coordinate chlorophyll a. W671 serves as a coordination point for phylloquinone. A helical transmembrane segment spans residues 707–727 (LVGLIHFTAGYIFTYAAFVIA).

Belongs to the PsaA/PsaB family. In terms of assembly, the PsaA/B heterodimer binds the P700 chlorophyll special pair and subsequent electron acceptors. PSI consists of a core antenna complex that captures photons, and an electron transfer chain that converts photonic excitation into a charge separation. The eukaryotic PSI reaction center is composed of at least 11 subunits. Requires P700 is a chlorophyll a/chlorophyll a' dimer, A0 is one or more chlorophyll a, A1 is one or both phylloquinones and FX is a shared 4Fe-4S iron-sulfur center. as cofactor.

Its subcellular location is the plastid. It is found in the chloroplast thylakoid membrane. The catalysed reaction is reduced [plastocyanin] + hnu + oxidized [2Fe-2S]-[ferredoxin] = oxidized [plastocyanin] + reduced [2Fe-2S]-[ferredoxin]. PsaA and PsaB bind P700, the primary electron donor of photosystem I (PSI), as well as the electron acceptors A0, A1 and FX. PSI is a plastocyanin/cytochrome c6-ferredoxin oxidoreductase, converting photonic excitation into a charge separation, which transfers an electron from the donor P700 chlorophyll pair to the spectroscopically characterized acceptors A0, A1, FX, FA and FB in turn. Oxidized P700 is reduced on the lumenal side of the thylakoid membrane by plastocyanin or cytochrome c6. This Rhodomonas salina (Cryptomonas salina) protein is Photosystem I P700 chlorophyll a apoprotein A2.